The following is a 101-amino-acid chain: Small ribosomal subunit protein uS14 (101 aa).

The protein belongs to the universal ribosomal protein uS14 family. Part of the 30S ribosomal subunit. Contacts proteins S3 and S10.

In terms of biological role, binds 16S rRNA, required for the assembly of 30S particles and may also be responsible for determining the conformation of the 16S rRNA at the A site. The protein is Small ribosomal subunit protein uS14 of Pseudoalteromonas translucida (strain TAC 125).